Consider the following 275-residue polypeptide: Light-independent protochlorophyllide reductase iron-sulfur ATP-binding protein (275 aa).

ATP contacts are provided by residues 12-17 (GIGKST) and Lys41. Mg(2+) is bound at residue Ser16. The [4Fe-4S] cluster site is built by Cys97 and Cys131. 182–183 (NR) provides a ligand contact to ATP.

This sequence belongs to the NifH/BchL/ChlL family. As to quaternary structure, homodimer. Protochlorophyllide reductase is composed of three subunits; BchL, BchN and BchB. [4Fe-4S] cluster is required as a cofactor.

It carries out the reaction chlorophyllide a + oxidized 2[4Fe-4S]-[ferredoxin] + 2 ADP + 2 phosphate = protochlorophyllide a + reduced 2[4Fe-4S]-[ferredoxin] + 2 ATP + 2 H2O. It functions in the pathway porphyrin-containing compound metabolism; bacteriochlorophyll biosynthesis (light-independent). Functionally, component of the dark-operative protochlorophyllide reductase (DPOR) that uses Mg-ATP and reduced ferredoxin to reduce ring D of protochlorophyllide (Pchlide) to form chlorophyllide a (Chlide). This reaction is light-independent. The L component serves as a unique electron donor to the NB-component of the complex, and binds Mg-ATP. The sequence is that of Light-independent protochlorophyllide reductase iron-sulfur ATP-binding protein from Pelodictyon phaeoclathratiforme (strain DSM 5477 / BU-1).